Consider the following 81-residue polypeptide: Sulfur carrier protein TusA (81 aa).

C19 functions as the Cysteine persulfide intermediate in the catalytic mechanism.

The protein belongs to the sulfur carrier protein TusA family. As to quaternary structure, interacts with IscS.

Its subcellular location is the cytoplasm. Its pathway is tRNA modification. Functionally, sulfur carrier protein involved in sulfur trafficking in the cell. Part of a sulfur-relay system required for 2-thiolation during synthesis of 2-thiouridine of the modified wobble base 5-methylaminomethyl-2-thiouridine (mnm(5)s(2)U) in tRNA. Interacts with IscS and stimulates its cysteine desulfurase activity. Accepts an activated sulfur from IscS, which is then transferred to TusD, and thus determines the direction of sulfur flow from IscS to 2-thiouridine formation. Also appears to be involved in sulfur transfer for the biosynthesis of molybdopterin. The protein is Sulfur carrier protein TusA of Salmonella choleraesuis (strain SC-B67).